We begin with the raw amino-acid sequence, 125 residues long: Large ribosomal subunit protein uL22 (125 aa).

This sequence belongs to the universal ribosomal protein uL22 family. In terms of assembly, part of the 50S ribosomal subunit.

Functionally, this protein binds specifically to 23S rRNA; its binding is stimulated by other ribosomal proteins, e.g. L4, L17, and L20. It is important during the early stages of 50S assembly. It makes multiple contacts with different domains of the 23S rRNA in the assembled 50S subunit and ribosome. Its function is as follows. The globular domain of the protein is located near the polypeptide exit tunnel on the outside of the subunit, while an extended beta-hairpin is found that lines the wall of the exit tunnel in the center of the 70S ribosome. This is Large ribosomal subunit protein uL22 from Acetivibrio thermocellus (strain ATCC 27405 / DSM 1237 / JCM 9322 / NBRC 103400 / NCIMB 10682 / NRRL B-4536 / VPI 7372) (Clostridium thermocellum).